The sequence spans 184 residues: MSWRSERIWIELIMGSRKTSNFCWAFILFLGSLGFLLVGTSSYIGRNLISLFPSQQIIFFPQGIVMSFYGIAGLFISSYLWCTISWNVGGGYDRFDRKEGRVCIFRWGFPGINRRIFLRFLMRDIQSIRIEVKEGLYPRRVLYMEVRGQGAIPLTRTDENFTPREIEQKAAELAYFLRVPIEVF.

The next 2 helical transmembrane spans lie at 24 to 44 (WAFI…SSYI) and 57 to 77 (IIFF…LFIS).

It belongs to the Ycf4 family.

Its subcellular location is the plastid. The protein localises to the chloroplast thylakoid membrane. Functionally, seems to be required for the assembly of the photosystem I complex. This is Photosystem I assembly protein Ycf4 from Buxus microphylla (Littleleaf boxwood).